The sequence spans 161 residues: Regulator of ribonuclease activity A (161 aa).

It belongs to the RraA family. In terms of assembly, homotrimer. Binds to both RNA-binding sites in the C-terminal region of Rne and to RhlB.

It is found in the cytoplasm. Functionally, globally modulates RNA abundance by binding to RNase E (Rne) and regulating its endonucleolytic activity. Can modulate Rne action in a substrate-dependent manner by altering the composition of the degradosome. Modulates RNA-binding and helicase activities of the degradosome. The chain is Regulator of ribonuclease activity A from Photobacterium profundum (strain SS9).